A 695-amino-acid polypeptide reads, in one-letter code: G-patch and R3H domain-containing protein C30B4.02c (695 aa).

Disordered stretches follow at residues 168-200, 213-242, 257-317, 332-351, 388-448, and 475-517; these read SDKE…NDDS, DIAN…EFDI, FADL…FDEG, GNTD…DEDE, DSED…VAAR, and DKSK…DSDN. A compositionally biased stretch (basic and acidic residues) spans 182-198; the sequence is CYKEQESEKELYSKDND. Composition is skewed to acidic residues over residues 262-286, 307-317, and 337-351; these read VLEE…EEEE, EDSESLEFDEG, and LAED…DEDE. Residues 421-434 show a composition bias toward basic residues; that stretch reads KKDRKLPKKMRKAQ. The 63-residue stretch at 525 to 587 folds into the R3H domain; that stretch reads KIFINDVYQR…KRYTMLSKTH (63 aa). In terms of domain architecture, G-patch spans 652–695; the sequence is KENPGRRLLEKLGWYAGKGLGHPENEGSKDSLRAIVKVSRSGLG.

The protein resides in the cytoplasm. The protein is G-patch and R3H domain-containing protein C30B4.02c of Schizosaccharomyces pombe (strain 972 / ATCC 24843) (Fission yeast).